The following is a 139-amino-acid chain: Holo-[acyl-carrier-protein] synthase (139 aa).

Asp-8 and Glu-61 together coordinate Mg(2+).

The protein belongs to the P-Pant transferase superfamily. AcpS family. Mg(2+) is required as a cofactor.

It localises to the cytoplasm. It catalyses the reaction apo-[ACP] + CoA = holo-[ACP] + adenosine 3',5'-bisphosphate + H(+). Transfers the 4'-phosphopantetheine moiety from coenzyme A to a Ser of acyl-carrier-protein. This is Holo-[acyl-carrier-protein] synthase from Bradyrhizobium diazoefficiens (strain JCM 10833 / BCRC 13528 / IAM 13628 / NBRC 14792 / USDA 110).